The chain runs to 120 residues: Large ribosomal subunit protein uL18 (120 aa).

It belongs to the universal ribosomal protein uL18 family. In terms of assembly, part of the 50S ribosomal subunit; part of the 5S rRNA/L5/L18/L25 subcomplex. Contacts the 5S and 23S rRNAs.

In terms of biological role, this is one of the proteins that bind and probably mediate the attachment of the 5S RNA into the large ribosomal subunit, where it forms part of the central protuberance. In Bordetella bronchiseptica (strain ATCC BAA-588 / NCTC 13252 / RB50) (Alcaligenes bronchisepticus), this protein is Large ribosomal subunit protein uL18.